The following is a 152-amino-acid chain: Vasotocin-neurophysin VT 1 (152 aa).

The signal sequence occupies residues 1 to 19 (MSDSFLPTCILCLLALSSA). Cysteine 20 and cysteine 25 are joined by a disulfide. Glycine 28 carries the post-translational modification Glycine amide. 7 cysteine pairs are disulfide-bonded: cysteine 40-cysteine 84, cysteine 43-cysteine 57, cysteine 51-cysteine 74, cysteine 58-cysteine 64, cysteine 91-cysteine 103, cysteine 97-cysteine 115, and cysteine 104-cysteine 109.

Belongs to the vasopressin/oxytocin family.

Its subcellular location is the secreted. Vasotocin is an antidiuretic hormone. The protein is Vasotocin-neurophysin VT 1 of Catostomus commersonii (White sucker).